The chain runs to 314 residues: Olfactory receptor 5B17 (314 aa).

Topologically, residues 1-23 (MENNTEVSEFILLGLTNAPELQV) are extracellular. N-linked (GlcNAc...) asparagine glycosylation is present at asparagine 3. A helical transmembrane segment spans residues 24 to 44 (PLFIMFTLIYLITLTGNLGMI). The Cytoplasmic segment spans residues 45-52 (ILILLDSH). The helical transmembrane segment at 53-73 (LHTPMYFFLSNLSLAGIGYSS) threads the bilayer. At 74–97 (AVTPKVLTGLLIEDKAISYSACAA) the chain is on the extracellular side. A disulfide bridge connects residues cysteine 95 and cysteine 187. Residues 98 to 118 (QMFFCAVFATVENYLLSSMAY) traverse the membrane as a helical segment. At 119 to 137 (DRYAAVCNPLHYTTTMTTR) the chain is on the cytoplasmic side. The chain crosses the membrane as a helical span at residues 138–158 (VCACLAIGCYVIGFLNASIQI). Residues 159 to 194 (GDTFRLSFCMSNVIHHFFCDKPAVITLTCSEKHISE) are Extracellular-facing. A helical membrane pass occupies residues 195–215 (LILVLISSFNVFFALLVTLIS). Residues 216–235 (YLFILITILKRHTGKGYQKP) are Cytoplasmic-facing. A helical membrane pass occupies residues 236–256 (LSTCGSHLIAIFLFYITVIIM). Residues 257 to 269 (YIRPSSSHSMDTD) lie on the Extracellular side of the membrane. The chain crosses the membrane as a helical span at residues 270–290 (KIASVFYTMIIPMLSPIVYTL). The Cytoplasmic portion of the chain corresponds to 291–314 (RNKDVKNAFMKVVEKAKYSLDSVF).

The protein belongs to the G-protein coupled receptor 1 family.

The protein resides in the cell membrane. Functionally, odorant receptor. In Homo sapiens (Human), this protein is Olfactory receptor 5B17 (OR5B17).